The primary structure comprises 306 residues: Glutaminase (306 aa).

7 residues coordinate substrate: serine 64, asparagine 115, glutamate 159, asparagine 166, tyrosine 190, tyrosine 242, and valine 260.

It belongs to the glutaminase family. Homotetramer.

It carries out the reaction L-glutamine + H2O = L-glutamate + NH4(+). The sequence is that of Glutaminase from Aliivibrio fischeri (strain MJ11) (Vibrio fischeri).